The chain runs to 81 residues: Large ribosomal subunit protein bL31 (81 aa).

This sequence belongs to the bacterial ribosomal protein bL31 family. Type A subfamily. In terms of assembly, part of the 50S ribosomal subunit.

Binds the 23S rRNA. In Synechocystis sp. (strain ATCC 27184 / PCC 6803 / Kazusa), this protein is Large ribosomal subunit protein bL31.